The sequence spans 92 residues: DNA-directed RNA polymerase subunit omega (92 aa).

It belongs to the RNA polymerase subunit omega family. The RNAP catalytic core consists of 2 alpha, 1 beta, 1 beta' and 1 omega subunit. When a sigma factor is associated with the core the holoenzyme is formed, which can initiate transcription.

It catalyses the reaction RNA(n) + a ribonucleoside 5'-triphosphate = RNA(n+1) + diphosphate. Functionally, promotes RNA polymerase assembly. Latches the N- and C-terminal regions of the beta' subunit thereby facilitating its interaction with the beta and alpha subunits. This Shewanella oneidensis (strain ATCC 700550 / JCM 31522 / CIP 106686 / LMG 19005 / NCIMB 14063 / MR-1) protein is DNA-directed RNA polymerase subunit omega.